Reading from the N-terminus, the 1372-residue chain is Disease resistance protein RRS1B (1372 aa).

The TIR domain occupies 2-137 (TESEQIVYIS…ETVRDVYEKL (136 aa)). Positions 166–417 (VGIWGMPGIG…GCGFFPHVGI (252 aa)) constitute an NB-ARC domain. Residue 170 to 177 (GMPGIGKT) participates in ATP binding. The LRR 1 repeat unit spans residues 491-515 (PEEIEGMFLDTSNLSFDIKHVAFDN). The LRR 2; degenerate repeat unit spans residues 528-544 (NPEVHHVNNFLKGSLSS). 10 LRR repeats span residues 545-568 (LPNV…NFDP), 570-591 (HLVE…TKDL), 614-637 (AQNL…TGQL), 638-658 (LHLR…PEIP), 659-681 (PNIE…IVKP), 693-718 (IPGL…KIST), 723-747 (PGKL…VNLE), 749-767 (LKAL…QGFP), 768-792 (RNLK…SLEF), and 798-823 (CVSL…CFDL). Positions 950-964 (INLHCWALGKAVERD) match the Nuclear localization signal motif. Positions 1174–1240 (DRGSRSSDLW…YISEHNHPFP (67 aa)) form a DNA-binding region, WRKY. Disordered regions lie at residues 1246 to 1288 (LAGS…ASPP) and 1337 to 1372 (QTMF…ILNR). Low complexity predominate over residues 1249-1269 (STRSSSSKCSDVTTSASSTVS). Residues 1270–1279 (QDKEGPDKSH) show a composition bias toward basic and acidic residues. Over residues 1337–1348 (QTMFLSRRSSGG) the composition is skewed to polar residues.

The protein belongs to the disease resistance TIR-NB-LRR family. In terms of assembly, interacts with RPS4B. RPS4B-RRS1B heterodimer interacts with the bacterial effectors AvrRps4 and PopP2.

Its subcellular location is the nucleus. Its function is as follows. Transcription factor. Interacts specifically with the W box (5'-(T)TGAC[CT]-3'), a frequently occurring elicitor-responsive cis-acting element. Also acts as a disease resistance protein that specifically recognizes the AvrRps4 type III effector avirulence protein from P.syringae. Heterodimerization with RPS4B is required to form a functional complex to recognize AvrRps4 and to mediate the hypersensitive response. The sequence is that of Disease resistance protein RRS1B from Arabidopsis thaliana (Mouse-ear cress).